The sequence spans 360 residues: CFA/I fimbrial subunit E (360 aa).

Its subcellular location is the fimbrium. This Escherichia coli protein is CFA/I fimbrial subunit E (cfaE).